The chain runs to 245 residues: 5'-nucleotidase SurE (245 aa).

A divalent metal cation contacts are provided by D8, D9, S39, and N97.

The protein belongs to the SurE nucleotidase family. The cofactor is a divalent metal cation.

The protein localises to the cytoplasm. It catalyses the reaction a ribonucleoside 5'-phosphate + H2O = a ribonucleoside + phosphate. In terms of biological role, nucleotidase that shows phosphatase activity on nucleoside 5'-monophosphates. This chain is 5'-nucleotidase SurE, found in Clostridium kluyveri (strain NBRC 12016).